Reading from the N-terminus, the 499-residue chain is MSFGSEHYLCSSSSYRKVFGDGSRLSARLSGAGGAGGFRSQSLSRSNVASSAACSSASSLGLGLAYRRPPASDGLDLSQAAARTNEYKIIRTNEKEQLQGLNDRFAVFIEKVHQLETQNRALEAELAALRQRHAEPSRVGELFQRELRDLRAQLEEASSARSQALLERDGLAEEVQRLRARCEEESRGREGAERALKAQQRDVDGATLARLDLEKKVESLLDELAFVRQVHDEEVAELLATLQASSQAAAEVDVTVAKPDLTSALREIRAQYESLAAKNLQSAEEWYKSKFANLNEQAARSTEAIRASREEIHEYRRQLQARTIEIEGLRGANESLERQILELEERHSAEVAGYQDSIGQLENDLRNTKSEMARHLREYQDLLNVKMALDIEIAAYRKLLEGEETRFSTSGLSISGLNPLPNPSYLLPPRILSATTSKVSSTGLSLKKEEEEEEASKVASKKTSQIGESFEEILEETVISTKKTEKSNIEETTISSQKI.

A head region spans residues 1–87 (MSFGSEHYLC…SQAAARTNEY (87 aa)). Position 72 is a phosphoserine (serine 72). The interval 88–129 (KIIRTNEKEQLQGLNDRFAVFIEKVHQLETQNRALEAELAAL) is coil 1A. An IF rod domain is found at 94–407 (EKEQLQGLND…KLLEGEETRF (314 aa)). Residues 130–142 (RQRHAEPSRVGEL) are linker 1. The segment at 143-238 (FQRELRDLRA…QVHDEEVAEL (96 aa)) is coil 1B. Position 219 is a phosphoserine (serine 219). The segment at 239–262 (LATLQASSQAAAEVDVTVAKPDLT) is linker 2. The coil 2 stretch occupies residues 263–408 (SALREIRAQY…LLEGEETRFS (146 aa)). Lysine 290 carries the N6-acetyllysine modification. Serine 335 is subject to Phosphoserine. Residues 409-499 (TSGLSISGLN…EETTISSQKI (91 aa)) are tail. Residues 441-466 (STGLSLKKEEEEEEASKVASKKTSQI) are disordered. Phosphoserine occurs at positions 469 and 496.

It belongs to the intermediate filament family. Forms homodimers (in vitro). Forms heterodimers with NEFL, NEFM or NEFH (in vitro). Post-translationally, O-glycosylated. Found predominantly in adult CNS.

Its function is as follows. Class-IV neuronal intermediate filament that is able to self-assemble. It is involved in the morphogenesis of neurons. It may form an independent structural network without the involvement of other neurofilaments or it may cooperate with NEFL to form the filamentous backbone to which NEFM and NEFH attach to form the cross-bridges. May also cooperate with the neuronal intermediate filament protein PRPH to form filamentous networks. This Homo sapiens (Human) protein is Alpha-internexin (INA).